A 372-amino-acid chain; its full sequence is Signal peptide peptidase-like 1 (372 aa).

The Lumenal segment spans residues Met1–Thr6. A helical transmembrane segment spans residues Leu7–Phe27. Residues Ala28–Asp54 are Cytoplasmic-facing. A helical transmembrane segment spans residues Ser55 to Ser77. Residues Ser78 to Gln81 lie on the Lumenal side of the membrane. A helical transmembrane segment spans residues Leu82 to Val104. Residues Tyr105–Lys123 are Cytoplasmic-facing. Residues Ser124–Ser146 traverse the membrane as a helical segment. At Gly147–Trp149 the chain is on the lumenal side. The helical transmembrane segment at Val150–Val167 threads the bilayer. At Arg168–Asn171 the chain is on the cytoplasmic side. Residues Ile172–Phe192 traverse the membrane as a helical segment. Asp186 is an active-site residue. Over Ser193 to Asp257 the chain is Lumenal. A helical transmembrane segment spans residues Phe258 to Cys278. Asp265 is a catalytic residue. At Phe279–Tyr301 the chain is on the cytoplasmic side. Residues Ile302–Leu322 traverse the membrane as a helical segment. Topologically, residues Thr323 to Ser325 are lumenal. A helical membrane pass occupies residues Pro326–Trp346. The short motif at Pro328–Leu330 is the PAL element. The Cytoplasmic portion of the chain corresponds to Arg347–Ile372.

This sequence belongs to the peptidase A22B family. Ubiquitous.

The protein localises to the endosome membrane. Functionally, intramembrane-cleaving aspartic protease (I-CLiP) that cleaves type II membrane signal peptides in the hydrophobic plane of the membrane. The protein is Signal peptide peptidase-like 1 (SPPL1) of Arabidopsis thaliana (Mouse-ear cress).